Here is a 206-residue protein sequence, read N- to C-terminus: Cytochrome c oxidase assembly protein CtaG (206 aa).

At 1–17 the chain is on the cytoplasmic side; it reads MPEVQPSALPKPAPRLG. A helical; Signal-anchor for type II membrane protein membrane pass occupies residues 18–40; that stretch reads RDAAVASICGFVVALMVGASFAA. Over 41-206 the chain is Periplasmic; it reads VPFYDWFCRT…GEPDQRKGNL (166 aa).

Belongs to the COX11/CtaG family.

The protein resides in the cell inner membrane. Exerts its effect at some terminal stage of cytochrome c oxidase synthesis, probably by being involved in the insertion of the copper B into subunit I. The sequence is that of Cytochrome c oxidase assembly protein CtaG from Rhodopseudomonas palustris (strain BisB5).